Consider the following 261-residue polypeptide: Indole-3-glycerol phosphate synthase (261 aa).

Belongs to the TrpC family.

The catalysed reaction is 1-(2-carboxyphenylamino)-1-deoxy-D-ribulose 5-phosphate + H(+) = (1S,2R)-1-C-(indol-3-yl)glycerol 3-phosphate + CO2 + H2O. It functions in the pathway amino-acid biosynthesis; L-tryptophan biosynthesis; L-tryptophan from chorismate: step 4/5. This chain is Indole-3-glycerol phosphate synthase, found in Campylobacter hominis (strain ATCC BAA-381 / DSM 21671 / CCUG 45161 / LMG 19568 / NCTC 13146 / CH001A).